The chain runs to 204 residues: Ribosomal RNA large subunit methyltransferase E (204 aa).

S-adenosyl-L-methionine is bound by residues Gly49, Trp51, Asp69, Asn87, and Asp111. Lys151 serves as the catalytic Proton acceptor.

This sequence belongs to the class I-like SAM-binding methyltransferase superfamily. RNA methyltransferase RlmE family.

The protein localises to the cytoplasm. It carries out the reaction uridine(2552) in 23S rRNA + S-adenosyl-L-methionine = 2'-O-methyluridine(2552) in 23S rRNA + S-adenosyl-L-homocysteine + H(+). Specifically methylates the uridine in position 2552 of 23S rRNA at the 2'-O position of the ribose in the fully assembled 50S ribosomal subunit. The chain is Ribosomal RNA large subunit methyltransferase E from Nitratidesulfovibrio vulgaris (strain ATCC 29579 / DSM 644 / CCUG 34227 / NCIMB 8303 / VKM B-1760 / Hildenborough) (Desulfovibrio vulgaris).